The chain runs to 78 residues: Large ribosomal subunit protein eL20 (78 aa).

Belongs to the eukaryotic ribosomal protein eL20 family. In terms of assembly, part of the 50S ribosomal subunit. Binds 23S rRNA.

This is Large ribosomal subunit protein eL20 from Pyrobaculum arsenaticum (strain DSM 13514 / JCM 11321 / PZ6).